Consider the following 473-residue polypeptide: MKTLYSLRRFYPVETLFNGTLALAGRDQETTGFAWWAGNARLINLSGKLLGAHVAHAGLIVFWAGGMNLFEVAHFVPEKPMYEQGLILLPHLATLGWGVGPGGEVIDTFPYFVSGVLHLISSAVLGFGGIYHALLGPETLEESFPFFGYVWKDRNKMTTILGIHLILLGIGAFLLVFKALYFGGVYDTWAPGGGDVRKITNLTLSPSIIFGYLLKSPFGGEGWIVSVDDLEDIIGGHVWLGSICILGGIWHILTKPFAWARRALVWSGEAYLSYSLGALSVFGFIACCFVWFNNTAYPSEFYGPTGPEASQAQAFTFLVRDQRLGANVGSAQGPTGLGKYLMRSPTGEVIFGGETMRFWDLRAPWLEPLRGPNGLDLSRLKKDIQPWQERRSAEYMTHAPLGSLNSVGGVATEINAVNYVSPRSWLATSHFVLGFFLFVGHLWHAGRARAAAAGFEKGIDRDFEPVLSMTPLN.

The propeptide occupies 1–14 (MKTLYSLRRFYPVE). Thr15 carries the N-acetylthreonine modification. At Thr15 the chain carries Phosphothreonine. The next 5 membrane-spanning stretches (helical) occupy residues 69 to 93 (LFEV…PHLA), 134 to 155 (LLGP…KDRN), 178 to 200 (KALY…RKIT), 255 to 275 (KPFA…LSYS), and 291 to 312 (WFNN…ASQA). Glu367 provides a ligand contact to [CaMn4O5] cluster. A helical transmembrane segment spans residues 447–471 (RARAAAAGFEKGIDRDFEPVLSMTP).

Belongs to the PsbB/PsbC family. PsbC subfamily. In terms of assembly, PSII is composed of 1 copy each of membrane proteins PsbA, PsbB, PsbC, PsbD, PsbE, PsbF, PsbH, PsbI, PsbJ, PsbK, PsbL, PsbM, PsbT, PsbX, PsbY, PsbZ, Psb30/Ycf12, at least 3 peripheral proteins of the oxygen-evolving complex and a large number of cofactors. It forms dimeric complexes. Binds multiple chlorophylls and provides some of the ligands for the Ca-4Mn-5O cluster of the oxygen-evolving complex. It may also provide a ligand for a Cl- that is required for oxygen evolution. PSII binds additional chlorophylls, carotenoids and specific lipids. is required as a cofactor.

Its subcellular location is the plastid. It is found in the chloroplast thylakoid membrane. Functionally, one of the components of the core complex of photosystem II (PSII). It binds chlorophyll and helps catalyze the primary light-induced photochemical processes of PSII. PSII is a light-driven water:plastoquinone oxidoreductase, using light energy to abstract electrons from H(2)O, generating O(2) and a proton gradient subsequently used for ATP formation. In Panax ginseng (Korean ginseng), this protein is Photosystem II CP43 reaction center protein.